A 299-amino-acid chain; its full sequence is Urease accessory protein UreD (299 aa).

The protein belongs to the UreD family. As to quaternary structure, ureD, UreF and UreG form a complex that acts as a GTP-hydrolysis-dependent molecular chaperone, activating the urease apoprotein by helping to assemble the nickel containing metallocenter of UreC. The UreE protein probably delivers the nickel.

It is found in the cytoplasm. Its function is as follows. Required for maturation of urease via the functional incorporation of the urease nickel metallocenter. This is Urease accessory protein UreD from Natronomonas pharaonis (strain ATCC 35678 / DSM 2160 / CIP 103997 / JCM 8858 / NBRC 14720 / NCIMB 2260 / Gabara) (Halobacterium pharaonis).